The primary structure comprises 765 residues: 1,4-alpha-glucan branching enzyme GlgB (765 aa).

The active-site Nucleophile is aspartate 431. Glutamate 484 serves as the catalytic Proton donor.

This sequence belongs to the glycosyl hydrolase 13 family. GlgB subfamily. Monomer.

The catalysed reaction is Transfers a segment of a (1-&gt;4)-alpha-D-glucan chain to a primary hydroxy group in a similar glucan chain.. It participates in glycan biosynthesis; glycogen biosynthesis. Functionally, catalyzes the formation of the alpha-1,6-glucosidic linkages in glycogen by scission of a 1,4-alpha-linked oligosaccharide from growing alpha-1,4-glucan chains and the subsequent attachment of the oligosaccharide to the alpha-1,6 position. The sequence is that of 1,4-alpha-glucan branching enzyme GlgB from Synechococcus sp. (strain CC9605).